The chain runs to 217 residues: Uracil-DNA glycosylase (217 aa).

The active-site Proton acceptor is the D62.

The protein belongs to the uracil-DNA glycosylase (UDG) superfamily. UNG family.

The protein resides in the cytoplasm. It catalyses the reaction Hydrolyzes single-stranded DNA or mismatched double-stranded DNA and polynucleotides, releasing free uracil.. In terms of biological role, excises uracil residues from the DNA which can arise as a result of misincorporation of dUMP residues by DNA polymerase or due to deamination of cytosine. The polypeptide is Uracil-DNA glycosylase (Streptococcus pneumoniae serotype 19F (strain G54)).